We begin with the raw amino-acid sequence, 444 residues long: Cysteine proteinase 2 (444 aa).

Positions 1 to 19 (MATSRAALCAVAVVCVVLA) form a signal peptide, or 27. A propeptide spans 20–124 (AACAPARAIH…HYRKARADLS (105 aa)) (activation peptide). Cysteines 147 and 188 form a disulfide. Cysteine 150 is an active-site residue. Asparagine 228 carries an N-linked (GlcNAc...) asparagine glycan. Active-site residues include histidine 289 and asparagine 309. Asparagine 372 carries N-linked (GlcNAc...) asparagine glycosylation.

Belongs to the peptidase C1 family.

The protein localises to the lysosome. The cysteine proteinases have a potential role in host-parasite interaction and virulence. This Leishmania pifanoi protein is Cysteine proteinase 2 (CYS2).